Consider the following 90-residue polypeptide: Barrier-to-autointegration factor-like protein (90 aa).

It belongs to the BAF family. Homodimer. Heterodimerizes with BANF1.

It localises to the nucleus. Its subcellular location is the cytoplasm. Its function is as follows. May play a role in BANF1 regulation and influence tissue-specific roles of BANF1. This is Barrier-to-autointegration factor-like protein (BANF2) from Bos taurus (Bovine).